Reading from the N-terminus, the 210-residue chain is Small ribosomal subunit protein uS7 (210 aa).

It belongs to the universal ribosomal protein uS7 family.

The polypeptide is Small ribosomal subunit protein uS7 (RPS5) (Podocoryna carnea (Hydrozoan)).